A 612-amino-acid chain; its full sequence is DNA mismatch repair protein MutL (612 aa).

This sequence belongs to the DNA mismatch repair MutL/HexB family.

In terms of biological role, this protein is involved in the repair of mismatches in DNA. It is required for dam-dependent methyl-directed DNA mismatch repair. May act as a 'molecular matchmaker', a protein that promotes the formation of a stable complex between two or more DNA-binding proteins in an ATP-dependent manner without itself being part of a final effector complex. The sequence is that of DNA mismatch repair protein MutL from Afipia carboxidovorans (strain ATCC 49405 / DSM 1227 / KCTC 32145 / OM5) (Oligotropha carboxidovorans).